A 98-amino-acid polypeptide reads, in one-letter code: uncharacterized protein (98 aa).

The protein belongs to the CFAP97 family. Expressed in a number of tissues including brain, thymus, lung, heart, liver, spleen, kidney and testis.

This is an uncharacterized protein from Mus musculus (Mouse).